A 199-amino-acid polypeptide reads, in one-letter code: V-set and transmembrane domain-containing protein 5 (199 aa).

An N-terminal signal peptide occupies residues 1–27; it reads MRPLRCGERTQGIPLGLLAFWVTAARC. Residues 28 to 146 are Extracellular-facing; that stretch reads LQSQGVSLYI…VSEIRYEDLH (119 aa). The Ig-like C2-type domain occupies 35-138; it reads LYIPQSAINA…QSGTILLRVS (104 aa). Residues Asn43, Asn87, and Asn101 are each glycosylated (N-linked (GlcNAc...) asparagine). A helical transmembrane segment spans residues 147–167; sequence FVAVFFALLAAVAVVLISLMW. Over 168-199 the chain is Cytoplasmic; it reads VCNQCAYKFQRKRRYKLKESTTEEIEMKEVEC. The tract at residues 169 to 185 is important for CDC42-dependent filopodia induction; sequence CNQCAYKFQRKRRYKLK.

As to quaternary structure, can homooligomerize through cis interactions within the same cell membrane. N-glycosylated. As to expression, highly expressed in the central nervous system (CNS), with the highest expression in thalamus, hippocampus, cerebrum, midbrain and spinal cord. Also highly expressed in stomach, kidney and small intestine.

It localises to the cell membrane. The protein localises to the cell projection. Its subcellular location is the dendrite. The protein resides in the axon. Functionally, cell adhesion-like membrane protein of the central nervous system (CNS) which modulates both the position and complexity of central neurons by altering their membrane morphology and dynamics. Involved in the formation of neuronal dendrites and protrusions including dendritic filopodia. In synaptogenesis, regulates synapse formation by altering dendritic spine morphology and actin distribution. Promotes formation of unstable neuronal spines such as thin and branched types. Regulates neuronal morphogenesis and migration during cortical development in the brain. This chain is V-set and transmembrane domain-containing protein 5, found in Mus musculus (Mouse).